Consider the following 312-residue polypeptide: D-alanine--D-alanine ligase (312 aa).

In terms of domain architecture, ATP-grasp spans 108 to 308; the sequence is KLVWQQTGIP…YSELVVKVLS (201 aa). 138–193 is an ATP binding site; that stretch reads VAKLGMPLFVKPASEGSSVAVEKVKSADALPAALEEAAKHDKIVIVEKSIEGGGEY. Mg(2+) contacts are provided by Asp-262, Glu-275, and Asn-277.

It belongs to the D-alanine--D-alanine ligase family. Mg(2+) is required as a cofactor. It depends on Mn(2+) as a cofactor.

The protein localises to the cytoplasm. It catalyses the reaction 2 D-alanine + ATP = D-alanyl-D-alanine + ADP + phosphate + H(+). Its pathway is cell wall biogenesis; peptidoglycan biosynthesis. Cell wall formation. This Burkholderia thailandensis (strain ATCC 700388 / DSM 13276 / CCUG 48851 / CIP 106301 / E264) protein is D-alanine--D-alanine ligase.